Consider the following 256-residue polypeptide: MYILRSCMEKKVLKIGQISDAHIGDDDRLVQDIDVRKNFLTAYNSESMKDLDLLVLSGDLADNASTDAYSFIAGVIKDSKVPVCIIPGNHDNLEVMEKVFDLKDKVHNGKCYYRYDLDGRSIFFLDSADGTVSSDQLSWLEQETAKIDGEVLLFLHHPPCLCGHKFMDLRYSMKNIAEVQATLSKIKNLKHIFVGHYHSEMTIQLEDKTVYVTPSTQMQIDPNITVFCLSSAAPRWRLIEWGENFMETKVYFSNTP.

Fe cation-binding residues include aspartate 20, histidine 22, aspartate 59, asparagine 89, histidine 156, histidine 196, and histidine 198. AMP is bound by residues histidine 22, aspartate 59, and asparagine 89–histidine 90. Histidine 198 provides a ligand contact to AMP.

It belongs to the cyclic nucleotide phosphodiesterase class-III family. Fe(2+) serves as cofactor.

In Fibrobacter succinogenes (strain ATCC 19169 / S85), this protein is Probable cyclic nucleotide phosphodiesterase Fisuc_1441/FSU_1912.